Here is a 151-residue protein sequence, read N- to C-terminus: Potassium/proton antiporter CemA (151 aa).

2 helical membrane-spanning segments follow: residues L7–F27 and I107–G127.

This sequence belongs to the CemA family.

It localises to the plastid. It is found in the chloroplast inner membrane. The catalysed reaction is K(+)(in) + H(+)(out) = K(+)(out) + H(+)(in). Functionally, contributes to K(+)/H(+) antiport activity by supporting proton efflux to control proton extrusion and homeostasis in chloroplasts in a light-dependent manner to modulate photosynthesis. Prevents excessive induction of non-photochemical quenching (NPQ) under continuous-light conditions. Indirectly promotes efficient inorganic carbon uptake into chloroplasts. The protein is Potassium/proton antiporter CemA of Aegilops crassa (Persian goatgrass).